Reading from the N-terminus, the 79-residue chain is ATP synthase subunit c (79 aa).

The next 2 helical transmembrane spans lie at 11–31 and 53–73; these read MAAAVMMGLAAIGAAIGIGIL and FFIVMGLVDAIPMIAVGLGLY.

It belongs to the ATPase C chain family. As to quaternary structure, F-type ATPases have 2 components, F(1) - the catalytic core - and F(0) - the membrane proton channel. F(1) has five subunits: alpha(3), beta(3), gamma(1), delta(1), epsilon(1). F(0) has three main subunits: a(1), b(2) and c(10-14). The alpha and beta chains form an alternating ring which encloses part of the gamma chain. F(1) is attached to F(0) by a central stalk formed by the gamma and epsilon chains, while a peripheral stalk is formed by the delta and b chains.

It localises to the cell inner membrane. Its function is as follows. F(1)F(0) ATP synthase produces ATP from ADP in the presence of a proton or sodium gradient. F-type ATPases consist of two structural domains, F(1) containing the extramembraneous catalytic core and F(0) containing the membrane proton channel, linked together by a central stalk and a peripheral stalk. During catalysis, ATP synthesis in the catalytic domain of F(1) is coupled via a rotary mechanism of the central stalk subunits to proton translocation. Functionally, key component of the F(0) channel; it plays a direct role in translocation across the membrane. A homomeric c-ring of between 10-14 subunits forms the central stalk rotor element with the F(1) delta and epsilon subunits. The polypeptide is ATP synthase subunit c (Citrobacter koseri (strain ATCC BAA-895 / CDC 4225-83 / SGSC4696)).